A 94-amino-acid chain; its full sequence is Signal peptidase complex subunit 1 (94 aa).

Ser-2 is modified (N-acetylserine). Residues 2–28 are Cytoplasmic-facing; it reads SEILQDVQRKLVFPIDFPSQRKTEKFQ. Residues 29 to 49 traverse the membrane as a helical segment; sequence QLSLMIGALVACILGFAQQSL. Residue Lys-50 is a topological domain, lumenal. Residues 51–71 traverse the membrane as a helical segment; it reads VLLTAYGISCVITLICVLPAY. Topologically, residues 72–94 are cytoplasmic; the sequence is PWYNKQKLRWAQPKIEINVDQYD.

This sequence belongs to the SPCS1 family. Component of the signal peptidase complex (SPC) composed of a catalytic subunit SEC11 and three accessory subunits SPC1, SPC2 and SPC3. The complex induces a local thinning of the ER membrane which is used to measure the length of the signal peptide (SP) h-region of protein substrates. This ensures the selectivity of the complex towards h-regions shorter than 18-20 amino acids. SPC associates with the translocon complex. Interacts with SBH1 and SEB2/SBH2.

The protein resides in the endoplasmic reticulum membrane. Component of the signal peptidase complex (SPC) which catalyzes the cleavage of N-terminal signal sequences from nascent proteins as they are translocated into the lumen of the endoplasmic reticulum. Dispensable for SPC enzymatic activity. This chain is Signal peptidase complex subunit 1 (SPC1), found in Saccharomyces cerevisiae (strain ATCC 204508 / S288c) (Baker's yeast).